A 432-amino-acid chain; its full sequence is Nuclear pore complex-interacting protein family member B9 (432 aa).

Disordered regions lie at residues 260–280 (RMGR…NSLS) and 353–420 (SPLP…LRTR). Polar residues predominate over residues 270 to 280 (QQHSITDNSLS). The segment covering 374–402 (EVEKPPKPKRWRVDEVEQSPKPKRQREAE) has biased composition (basic and acidic residues). The segment covering 408–420 (KPKRRRLSKLRTR) has biased composition (basic residues).

Belongs to the NPIP family.

The chain is Nuclear pore complex-interacting protein family member B9 (NPIPB9) from Homo sapiens (Human).